A 91-amino-acid polypeptide reads, in one-letter code: HssA/B-like protein 24 (91 aa).

It belongs to the hssA/B family.

This chain is HssA/B-like protein 24 (hssl24), found in Dictyostelium discoideum (Social amoeba).